The sequence spans 101 residues: MSGFSQERLMQVLLAPQISEKATYVADKNEQVVFKVASTATKPEVKAAVELLFKVEVKSVQIANVKGKVKRFGKMTGRRKDWKKAFVCLKPGQEINFAAGE.

This sequence belongs to the universal ribosomal protein uL23 family. In terms of assembly, part of the 50S ribosomal subunit. Contacts protein L29, and trigger factor when it is bound to the ribosome.

One of the early assembly proteins it binds 23S rRNA. One of the proteins that surrounds the polypeptide exit tunnel on the outside of the ribosome. Forms the main docking site for trigger factor binding to the ribosome. The protein is Large ribosomal subunit protein uL23 of Aromatoleum aromaticum (strain DSM 19018 / LMG 30748 / EbN1) (Azoarcus sp. (strain EbN1)).